Reading from the N-terminus, the 368-residue chain is MNFKGYSDYRHDTVARIGVLVASLGTPEAPTASAVRRFLASFLSDPRVVELPRPLWWLILHGIILRIRPSPVARLYQSIWREDGSPLLSFARRVGQSLQAELDSRGRSIEIRLGMRHGSPSIETALEELRQSGAQRLLVFPLYPQYSGSTTGSTFDAVAQVLSTWRWVPELRMIAQYHDHSGYLEALAETIRRSWKEAGRGERLLISFHGLPKRYLLAGDPYHCQCQKTARLLAERLGLKEGEWQIAFQSRFGREEWLKPYADHLLQAWAEAGIKRVDVVCPGFAVDCLETLEEMAQRNRELFLHAGGEEYRYIPALNDESAHIRALTDLVEQHIQGWSEADLGGGREATGQAAERSRQRALALGAKQ.

2 residues coordinate Fe cation: His209 and Glu290. The interval 341 to 368 (ADLGGGREATGQAAERSRQRALALGAKQ) is disordered.

This sequence belongs to the ferrochelatase family.

Its subcellular location is the cytoplasm. The catalysed reaction is heme b + 2 H(+) = protoporphyrin IX + Fe(2+). It participates in porphyrin-containing compound metabolism; protoheme biosynthesis; protoheme from protoporphyrin-IX: step 1/1. Its function is as follows. Catalyzes the ferrous insertion into protoporphyrin IX. The sequence is that of Ferrochelatase from Nitrosococcus oceani (strain ATCC 19707 / BCRC 17464 / JCM 30415 / NCIMB 11848 / C-107).